The primary structure comprises 217 residues: 3,4-dihydroxy-2-butanone 4-phosphate synthase (217 aa).

D-ribulose 5-phosphate contacts are provided by residues 37 to 38 (RE), aspartate 42, 150 to 154 (RRGHT), and glutamate 174. Glutamate 38 is a binding site for Mg(2+). Histidine 153 contacts Mg(2+).

The protein belongs to the DHBP synthase family. Homodimer. Mg(2+) serves as cofactor. The cofactor is Mn(2+).

It catalyses the reaction D-ribulose 5-phosphate = (2S)-2-hydroxy-3-oxobutyl phosphate + formate + H(+). The protein operates within cofactor biosynthesis; riboflavin biosynthesis; 2-hydroxy-3-oxobutyl phosphate from D-ribulose 5-phosphate: step 1/1. In terms of biological role, catalyzes the conversion of D-ribulose 5-phosphate to formate and 3,4-dihydroxy-2-butanone 4-phosphate. The chain is 3,4-dihydroxy-2-butanone 4-phosphate synthase from Shewanella sediminis (strain HAW-EB3).